Reading from the N-terminus, the 156-residue chain is Small ribosomal subunit protein bS16 (156 aa).

Low complexity-rich tracts occupy residues 113–123 (AESGTTAAATT) and 137–156 (EAPA…ASES). Positions 113 to 156 (AESGTTAAATTPKKKKAPKKDEAAEAPAEAAEAPAEAADAASES) are disordered.

Belongs to the bacterial ribosomal protein bS16 family.

This Mycolicibacterium smegmatis (strain ATCC 700084 / mc(2)155) (Mycobacterium smegmatis) protein is Small ribosomal subunit protein bS16.